A 213-amino-acid chain; its full sequence is Octanoyltransferase (213 aa).

A BPL/LPL catalytic domain is found at 35–213 (DKHGDAVLLL…ERHLPTLVGA (179 aa)). Substrate-binding positions include 73 to 80 (RGGKITWH), 145 to 147 (AIG), and 158 to 160 (GFS). The active-site Acyl-thioester intermediate is C176.

Belongs to the LipB family.

The protein resides in the cytoplasm. It catalyses the reaction octanoyl-[ACP] + L-lysyl-[protein] = N(6)-octanoyl-L-lysyl-[protein] + holo-[ACP] + H(+). Its pathway is protein modification; protein lipoylation via endogenous pathway; protein N(6)-(lipoyl)lysine from octanoyl-[acyl-carrier-protein]: step 1/2. Its function is as follows. Catalyzes the transfer of endogenously produced octanoic acid from octanoyl-acyl-carrier-protein onto the lipoyl domains of lipoate-dependent enzymes. Lipoyl-ACP can also act as a substrate although octanoyl-ACP is likely to be the physiological substrate. This Salinispora arenicola (strain CNS-205) protein is Octanoyltransferase.